A 504-amino-acid chain; its full sequence is Anaerobic nitric oxide reductase transcription regulator NorR (504 aa).

At D57 the chain carries 4-aspartylphosphate. A Sigma-54 factor interaction domain is found at 187-416 (MIGLSPGMTQ…LEHAIHRAVV (230 aa)). ATP is bound by residues 215-222 (GETGTGKE) and 278-287 (ADNGTLFLDE). Positions 479–498 (WAACARMLETDVANLHRLAK) form a DNA-binding region, H-T-H motif.

The protein operates within nitrogen metabolism; nitric oxide reduction. In terms of biological role, required for the expression of anaerobic nitric oxide (NO) reductase, acts as a transcriptional activator for at least the norVW operon. Activation also requires sigma-54. The sequence is that of Anaerobic nitric oxide reductase transcription regulator NorR from Escherichia coli O17:K52:H18 (strain UMN026 / ExPEC).